We begin with the raw amino-acid sequence, 872 residues long: Valine--tRNA ligase (872 aa).

The 'HIGH' region signature appears at 49-59; it reads PNVTGILHIGH. The short motif at 531–535 is the 'KMSKS' region element; sequence KMSKS. Position 534 (Lys-534) interacts with ATP. A coiled-coil region spans residues 810–871; that stretch reads PLIARLKKQL…IQQELDLLEQ (62 aa).

Belongs to the class-I aminoacyl-tRNA synthetase family. ValS type 1 subfamily. In terms of assembly, monomer.

The protein resides in the cytoplasm. It carries out the reaction tRNA(Val) + L-valine + ATP = L-valyl-tRNA(Val) + AMP + diphosphate. In terms of biological role, catalyzes the attachment of valine to tRNA(Val). As ValRS can inadvertently accommodate and process structurally similar amino acids such as threonine, to avoid such errors, it has a 'posttransfer' editing activity that hydrolyzes mischarged Thr-tRNA(Val) in a tRNA-dependent manner. The polypeptide is Valine--tRNA ligase (Helicobacter pylori (strain J99 / ATCC 700824) (Campylobacter pylori J99)).